The chain runs to 460 residues: tRNA(Ile)-lysidine synthase (460 aa).

Residue serine 30–serine 35 coordinates ATP.

This sequence belongs to the tRNA(Ile)-lysidine synthase family.

It is found in the cytoplasm. The enzyme catalyses cytidine(34) in tRNA(Ile2) + L-lysine + ATP = lysidine(34) in tRNA(Ile2) + AMP + diphosphate + H(+). Its function is as follows. Ligates lysine onto the cytidine present at position 34 of the AUA codon-specific tRNA(Ile) that contains the anticodon CAU, in an ATP-dependent manner. Cytidine is converted to lysidine, thus changing the amino acid specificity of the tRNA from methionine to isoleucine. The chain is tRNA(Ile)-lysidine synthase from Yersinia pseudotuberculosis serotype I (strain IP32953).